The following is a 183-amino-acid chain: Adenylate kinase (183 aa).

Residue 12–17 (GAGKGT) coordinates ATP. The interval 32 to 61 (STGDLLRSEVAAGSELGKEAEAVMNRGELV) is NMP. Residues threonine 33, arginine 38, 59-61 (ELV), 86-89 (GFPR), and glutamine 93 each bind AMP. The interval 127 to 133 (SRGRADD) is LID. Arginine 128 is a binding site for ATP. AMP-binding residues include arginine 130 and arginine 141. Residue glycine 169 coordinates ATP.

This sequence belongs to the adenylate kinase family. As to quaternary structure, monomer.

The protein resides in the cytoplasm. The catalysed reaction is AMP + ATP = 2 ADP. Its pathway is purine metabolism; AMP biosynthesis via salvage pathway; AMP from ADP: step 1/1. In terms of biological role, catalyzes the reversible transfer of the terminal phosphate group between ATP and AMP. Plays an important role in cellular energy homeostasis and in adenine nucleotide metabolism. The sequence is that of Adenylate kinase from Synechococcus sp. (strain CC9902).